The primary structure comprises 73 residues: Antimicrobial peptide 6 (73 aa).

The signal sequence occupies residues 1-22 (MQIKHLITLFFLVLIVADQCSA). Residues 45 to 73 (EISTQIDQYRNLQKREAELEELLDRLPMY) constitute a propeptide that is removed on maturation.

The protein belongs to the non-disulfide-bridged peptide (NDBP) superfamily. Short antimicrobial peptide (group 4) family. As to expression, expressed by the venom gland.

The protein localises to the secreted. Functionally, antibacterial peptide. This chain is Antimicrobial peptide 6, found in Tityus costatus (Brazilian scorpion).